A 192-amino-acid chain; its full sequence is Epididymal-specific lipocalin-12 (192 aa).

The signal sequence occupies residues 1 to 19 (MRLLCGLWLWLSLLKVLQA). Cys88 and Cys192 are oxidised to a cystine.

It belongs to the calycin superfamily. Lipocalin family. In terms of assembly, monomer.

It localises to the secreted. Functionally, binds all-trans retinoic acid and may act as a retinoid carrier protein within the epididymis. May play a role in male fertility. This Homo sapiens (Human) protein is Epididymal-specific lipocalin-12 (LCN12).